The following is a 411-amino-acid chain: Putative ion-transport protein YfeO (411 aa).

A run of 11 helical transmembrane segments spans residues 9-29, 54-74, 99-119, 149-169, 186-206, 223-243, 258-278, 296-316, 322-342, 343-363, and 386-406; these read MLLLSLPALIIGVASSLVLIA, DSPFWIVGMLTLTGIVVGLII, ALPGLLLALIIGLAGGVSLGP, ILASAGTIGALFGTPVAAALI, LFAPLMAAAAGSLTTSLFFHP, IASGAIVAAIAIAAGMVAVWC, VLILGIGGFILGILGVIGGPL, LGAGDYFTLAVVKLAALVIAA, GGRIFPAVFIGAALGLMLHAH, VEAVPAAITVSCAILGLVLVV, and LLCIVMLPAWLLLAGKPLLAA.

Belongs to the chloride channel (TC 2.A.49) family.

It is found in the cell membrane. The protein is Putative ion-transport protein YfeO of Salmonella agona (strain SL483).